Consider the following 291-residue polypeptide: G1/S-specific cyclin-D2 (291 aa).

The segment at 261-291 (TRQQTQQRNSSKSVDELDQASTPTDVQDINL) is disordered. The segment covering 279 to 291 (QASTPTDVQDINL) has biased composition (polar residues). At threonine 282 the chain carries Phosphothreonine.

This sequence belongs to the cyclin family. Cyclin D subfamily. In terms of assembly, interacts with the cdk4 and cdk6 protein kinases to form a serine/threonine kinase holoenzyme complex. The cyclin subunit imparts substrate specificity to the complex. Post-translationally, phosphorylation at Thr-282 by MAP kinases is required for ubiquitination and degradation by the DCX(AMBRA1) complex. Ubiquitinated by the DCX(AMBRA1) complex during the transition from G1 to S cell phase, leading to its degradation: ubiquitination is dependent on Thr-282 phosphorylation. The DCX(AMBRA1) complex represents the major regulator of CCND2 stability during the G1/S transition.

Its subcellular location is the nucleus. It is found in the cytoplasm. The protein resides in the nucleus membrane. In terms of biological role, regulatory component of the cyclin D2-CDK4 (DC) complex that phosphorylates and inhibits members of the retinoblastoma (RB) protein family including RB1 and regulates the cell-cycle during G(1)/S transition. Phosphorylation of RB1 allows dissociation of the transcription factor E2F from the RB/E2F complex and the subsequent transcription of E2F target genes which are responsible for the progression through the G(1) phase. Hypophosphorylates RB1 in early G(1) phase. Cyclin D-CDK4 complexes are major integrators of various mitogenenic and antimitogenic signals. The protein is G1/S-specific cyclin-D2 (ccnd2) of Xenopus laevis (African clawed frog).